Consider the following 131-residue polypeptide: Type 3 secretion system pilotin (131 aa).

Residues Met-1–Gly-15 form the signal peptide. Cys-16 carries N-palmitoyl cysteine lipidation. The S-diacylglycerol cysteine moiety is linked to residue Cys-16.

The protein belongs to the ExsB/YscW family. As to quaternary structure, interacts with YscC/SctC.

Its subcellular location is the cell outer membrane. Involved in the synthesis of the type III secretion system (T3SS), also called injectisome, which is used to inject bacterial effector proteins into eukaryotic host cells. Pilot protein that is required for the proper localization of the secretin YscC/SctC in the outer membrane. Also required for efficient oligomerization of YscC/SctC and stabilization of the oligomers. The chain is Type 3 secretion system pilotin from Yersinia enterocolitica.